The following is a 352-amino-acid chain: GTPase Obg (352 aa).

The Obg domain maps to 1-159 (MHFLDQAKIF…MYVWLRLKLL (159 aa)). The segment at 122-142 (DGGRGNASYKTSTNRAPRQHG) is disordered. The 169-residue stretch at 160–328 (ADAGLVGLPN…LLDAVLEYLP (169 aa)) folds into the OBG-type G domain. GTP-binding positions include 166-173 (GLPNAGKS), 191-195 (FTTLR), 212-215 (DIPG), 280-283 (NKID), and 309-311 (SGA). Positions 173 and 193 each coordinate Mg(2+).

This sequence belongs to the TRAFAC class OBG-HflX-like GTPase superfamily. OBG GTPase family. In terms of assembly, monomer. Mg(2+) serves as cofactor.

The protein localises to the cytoplasm. Its function is as follows. An essential GTPase which binds GTP, GDP and possibly (p)ppGpp with moderate affinity, with high nucleotide exchange rates and a fairly low GTP hydrolysis rate. Plays a role in control of the cell cycle, stress response, ribosome biogenesis and in those bacteria that undergo differentiation, in morphogenesis control. This Novosphingobium aromaticivorans (strain ATCC 700278 / DSM 12444 / CCUG 56034 / CIP 105152 / NBRC 16084 / F199) protein is GTPase Obg.